The sequence spans 522 residues: Amphoterin-induced protein 2 (522 aa).

The first 39 residues, 1 to 39 (MSLRVHTLPTLLGAVVRPGCRELLCLLMITVTVGPGASG), serve as a signal peptide directing secretion. Residues 40 to 68 (VCPTACICATDIVSCTNKNLSKVPGNLFR) enclose the LRRNT domain. Over 40–398 (VCPTACICAT…RSHAHEAFNT (359 aa)) the chain is Extracellular. Disulfide bonds link Cys41-Cys47 and Cys45-Cys54. Asn58 carries an N-linked (GlcNAc...) asparagine glycan. LRR repeat units lie at residues 69 to 90 (LIKR…WIPV), 94 to 115 (KLNT…SFST), 118 to 139 (NLKC…VFQE), 142 to 163 (VLEV…AFGG), 166 to 187 (QLQK…LYVG), and 193 to 214 (ELMF…HINL). An N-linked (GlcNAc...) asparagine glycan is attached at Asn104. The LRRCT domain occupies 228–284 (NPFVCDCSLYSLLVFWYRRHFSSVMDFKNDYTCRLWSDSRHSRQVLLLQDSFMNCSD). 2 disulfide bridges follow: Cys232–Cys260 and Cys234–Cys282. N-linked (GlcNAc...) asparagine glycosylation is found at Asn281, Asn288, Asn345, Asn373, Asn381, and Asn384. The Ig-like C2-type domain occupies 289–379 (GSFRALGFIH…RLLNETVDVT (91 aa)). A disulfide bridge connects residues Cys310 and Cys363. A helical transmembrane segment spans residues 399–419 (AFTTLAACVASIVLVLLYLYL). Residues 420 to 522 (TPCPCKCKTK…FSDTPFVAST (103 aa)) lie on the Cytoplasmic side of the membrane. The interval 501-522 (RGKSDSDSVNSVFSDTPFVAST) is disordered.

It belongs to the immunoglobulin superfamily. AMIGO family. As to quaternary structure, binds itself as well as AMIGO1 and AMIGO3. In terms of tissue distribution, highest levels in breast, ovary, cervix, and uterus. Lower levels in lung, colon, and rectum. Differentially expressed in 56% of thyroid, 57% of pancreatic and 45% of stomach cancers.

Its subcellular location is the cell membrane. The protein localises to the nucleus. Its function is as follows. Required for depolarization-dependent survival of cultured cerebellar granule neurons. May mediate homophilic as well as heterophilic cell-cell interaction with AMIGO1 or AMIGO3. May contribute to signal transduction through its intracellular domain. May be required for tumorigenesis of a subset of gastric adenocarcinomas. This is Amphoterin-induced protein 2 from Homo sapiens (Human).